Consider the following 245-residue polypeptide: 4-hydroxy-tetrahydrodipicolinate reductase (245 aa).

Residues 7-12 (GAKGKV), 75-77 (GTT), and 102-105 (APNF) each bind NAD(+). His-132 functions as the Proton donor/acceptor in the catalytic mechanism. His-133 provides a ligand contact to (S)-2,3,4,5-tetrahydrodipicolinate. Lys-136 (proton donor) is an active-site residue. Residue 142 to 143 (GT) coordinates (S)-2,3,4,5-tetrahydrodipicolinate.

Belongs to the DapB family.

Its subcellular location is the cytoplasm. The catalysed reaction is (S)-2,3,4,5-tetrahydrodipicolinate + NAD(+) + H2O = (2S,4S)-4-hydroxy-2,3,4,5-tetrahydrodipicolinate + NADH + H(+). The enzyme catalyses (S)-2,3,4,5-tetrahydrodipicolinate + NADP(+) + H2O = (2S,4S)-4-hydroxy-2,3,4,5-tetrahydrodipicolinate + NADPH + H(+). Its pathway is amino-acid biosynthesis; L-lysine biosynthesis via DAP pathway; (S)-tetrahydrodipicolinate from L-aspartate: step 4/4. Catalyzes the conversion of 4-hydroxy-tetrahydrodipicolinate (HTPA) to tetrahydrodipicolinate. This Mycobacterium ulcerans (strain Agy99) protein is 4-hydroxy-tetrahydrodipicolinate reductase.